Reading from the N-terminus, the 3013-residue chain is MSNITIDPDVKPGEYVIKSLFAEFAVQAEKKIEVVMAEPLEKLLSRSLQRGEDLQFDQLISSMSSVAEHCLPSLLRTLFDWYRRQNGTEDESYEYRPRSSTKSKGDEQQRERDYLLERRDLAVDFIFCLVLVEVLKQIPVHPVPDPLVHEVLNLAFKHFKHKEGYSGTNTGNVHIIADLYAEVIGVLAQSKFQAVRKKFVTELKELRQKEQSPHVVQSVISLIMGMKFFRVKMYPVEDFEASFQFMQECAQYFLEVKDKDIKHALAGLFVEILIPVAAAVKNEVNVPCLKNFVEMLYQTTFELSSRKKHSLALYPLITCLLCVSQKQFFLNNWHIFLQNCLSHLKNKDPKMSRVALESLYRLLWVYVIRIKCESNTVTQSRLMSIVSALFPKGSRSVVPRDTPLNIFVKIIQFIAQERLDFAMKEIIFDLLSVGKSTKTFTINPERMNIGLRVFLVIADSLQQKDGEPPMPTTGVILPSGNTLRVKKIFLNKTLTDEEAKVIGMSVYYPQVRKALDSILRHLDKEVGRPMCMTSVQMSNKEPEDMITGERKPKIDLFRTCIAAIPRLIPDGMSRTDLIELLARLTIHMDEELRALAFNTLQALMLDFPDWREDVLSGFVYFIVREVTDVHPTLLDNAVKMLVQLINQWKQAAQMHNKNQDTQHGVANGASHPPPLERSPYSNVFHVVEGFALVILCSSRPATRRLAVSVLREIRALFALLEIPKGDDELAIDVMDRLSPSILESFIHLTGADQTTLLYCPSSIDLQTLAEWNSSPISHQFDVISPSHIWIFAHVTQGQDPWIISLSSFLKQENLPKHCSTAVSYAWMFAYTRLQLLSPQVDINSPINAKKVNTTTSSDSYIGLWRNYLILCCSAATSSSSTSAGSVRCSPPETLASTPDSGYSIDSKIIGIPSPSSLFKHIVPMMRSESMEITESLVLGLGRTNPGAFRELIEELHPIIKEALERRPENMKRRRRRDILRVQLVRIFELLADAGVISHSASGGLDNETHFLNNTLLEYVDLTRQLLEAENEKDSDTLKDIRCHFSALVANIIQNVPVHQRRSIFPQQSLRHSLFMLFSHWAGPFSIMFTPLDRYSDRNMQINRHQYCALKAMSAVLCCGPVADNVGLSSDGYLYKWLDNILDSLDKKVHQLGCEAVTLLLELNPDQSNLMYWAVDRCYTGSGRVAAGCFKAIANVFQNRDYQCDTVMLLNLILFKAADSSRSIYEVAMQLLQILEPKMFRYAHKLEVQRTDGVLSQLSPLPHLYSVSYYQLSEELARAYPELTLAIFSEISQRIQTAHPAGRQVMLHYLLPWMNNIELVDLKPLPTARRHDEDEDDSLKDRELMVTSRRWLRGEGWGSPQATAMVLNNLMYMTAKYGDELAWSEVENVWTTLADGWPKNLKIILHFLISICGVNSEPSLLPYVKKVIVYLGRDKTMQLLEELVSELQLTDPVSSGVTHMDNPPYYRITSSYKIPSVTSGTTSSSNTMVAPTDGNPDNKPIKENIEESYVHLDIYSGLNSHLNRQHHRLESRYSSSSGGSYEEEKSDSMPLYSNWRLKVMEHNQGEPLPFPPAGGCWSPLVDYVPETSSPGLPLHRCNIAVILLTDLIIDHSVKVEWGSYLHLLLHAIFIGFDHCHPEVYEHCKRLLLHLLIVMGPNSNIRTVASVLLRNKEFNEPRVLTVKQVAHLDYNFTAGINDFIPDYQPSPMTDSGLSSSSTSSSISLGNNSAAISHLHTTILNEVDISVEQDGKVKTLMEFITSRKRGPLWNHEDVSAKNPSIKSAEQLTTFLKHVVSVFKQSSSEGIHLEHHLSEVALQTALSCSSRHYAGRSFQIFRALKQPLTATTLSDVLSRLVETVGDPGEDAQGFVIELLLTLESAIDTLAETMKHYDLLSALSQTSYHDPIMGNKYAANRKSTGQLNLSTSPINSSSYLGYNSNARSNSLRLSLIGDRRGDRRRSNTLDIMDGRINHSSSLARTRSLSSLREKGMYDVQSTTEPTNLMATIFWIAASLLESDYEYEYLLALRLLNKLLIHLPLDKSESREKIENVQSKLKWTNFPGLQQLFLKGFTSASTQEMTVHLLSKLISVSKHTLVDPSQLSGFPLNILCLLPHLIQHFDSPTQFCKETASRIAKVCAEEKCPTLVNLAHMMSLYSTHTYSRDCSNWINVVCRYLHDSFSDTTFNLVTYLAELLEKGLSSMQQSLLQIIYSLLSHIDLSAAPAKQFNLEIIKIIGKYVQSPYWKEALNILKLVVSRSASLVVPSDIPKTYGGDTGSPEISFTKIFNNVSKELPGKTLDFHFDISETPIIGNKYGDQHSAAGRNGKPKVIAVTRSTSSTSSGSNSNALVPVSWKRPQLSQRRTREKLMNVLSLCGPESGLPKNPSVVFSSNEDLEVGDQQTSLISTTEDINQEEEVAVEDNSSEQQFGVFKDFDFLDVELEDAEGESMDNFNWGVRRRSLDSIDKGDTPSLQEYQCSSSTPSLNLTNQEDTDESSEEEAALTASQILSRTQMLNSDSATDETIPDHPDLLLQSEDSTGSITTEEVLQIRDETPTLEASLDNANSRLPEDTTSVLKEEHVTTFEDEGSYIIQEQQESLVCQGILDLEETEMPEPLAPESYPESVCEEDVTLALKELDERCEEEEADFSGLSSQDEEEQDGFPEVQTSPLPSPFLSAIIAAFQPVAYDDEEEAWRCHVNQMLSDTDGSSAVFTFHVFSRLFQTIQRKFGEITNEAVSFLGDSLQRIGTKFKSSLEVMMLCSECPTVFVDAETLMSCGLLETLKFGVLELQEHLDTYNVKREAAEQWLDDCKRTFGAKEDMYRINTDAQQMEILAELELCRRLYKLHFQLLLLFQAYCKLINQVNTIKNEAEVINMSEELAQLESILKEAESASENEEIDISKAAQTTIETAIHSLIETLKNKEFISAVAQVKAFRSLWPSDIFGSCEDDPVQTLLHIYFHHQTLGQTGSFAVIGSNLDMSEANYKLMELNLEIRESLRMVQSYQLLAQAKPMGNMVSTGF.

Residue serine 2 is modified to N-acetylserine. A disordered region spans residues aspartate 90–glutamine 109. At serine 844 the chain carries Phosphoserine. Disordered regions lie at residues serine 878–threonine 897 and valine 1476–lysine 1498. A compositionally biased stretch (low complexity) spans valine 1476–threonine 1486. Phosphoserine occurs at positions 1914, 1935, 1941, 1945, and 1957. A Phosphothreonine modification is found at threonine 1959. Phosphoserine is present on residues serine 1978, serine 2272, and serine 2454. Residues aspartate 2459–glutamate 2492 form a disordered region. A compositionally biased stretch (polar residues) spans proline 2464–glutamine 2483. Serine 2499 bears the Phosphoserine mark. Disordered regions lie at residues leucine 2508–serine 2567 and glutamate 2636–threonine 2660. Composition is skewed to polar residues over residues serine 2528–glutamate 2539 and aspartate 2555–serine 2567.

It belongs to the furry protein family. Widely expressed with higher expression in colon, placenta, brain and cells of lymphoid origin.

Its function is as follows. Plays a key role in maintaining the integrity of polarized cell extensions during morphogenesis, regulates the actin cytoskeleton and plays a key role in patterning sensory neuron dendritic fields by promoting avoidance between homologous dendrites as well as by limiting dendritic branching. May function as a transcriptional activator. This is Protein furry homolog-like (FRYL) from Homo sapiens (Human).